The chain runs to 88 residues: MQTGKDAASAAKAGMEKTKANVQEKAERMTTRDPLKKEMATEKKEDRVAAAEMGKRDAKAQHAAEKQGAATTGTGTTGYGATGNHTTF.

The interval 1–88 (MQTGKDAASA…YGATGNHTTF (88 aa)) is disordered. A compositionally biased stretch (basic and acidic residues) spans 14 to 65 (GMEKTKANVQEKAERMTTRDPLKKEMATEKKEDRVAAAEMGKRDAKAQHAAE).

This sequence belongs to the LEA type 1 family. As to expression, accumulates in developing seeds and drought-stressed leaves.

This Solanum lycopersicum (Tomato) protein is Protein LE25 (LE25).